The primary structure comprises 196 residues: Corticoliberin (196 aa).

An N-terminal signal peptide occupies residues 1-24 (MRLPLLVSAGVLLVALLPCPPCRA). Positions 25–153 (LLSRGPVPGA…HQEAPERERR (129 aa)) are excised as a propeptide. 3 disordered regions span residues 32–61 (PGAR…QPQA), 85–105 (APLS…PSPE), and 136–158 (GARN…EEPP). Low complexity-rich tracts occupy residues 38–47 (PQHPQPLDFF) and 85–104 (APLS…RPSP). The span at 146-156 (EAPERERRSEE) shows a compositional bias: basic and acidic residues. Ile-194 is subject to Isoleucine amide.

The protein belongs to the sauvagine/corticotropin-releasing factor/urotensin I family. As to quaternary structure, interacts (via C-terminus) with CRFR1 (via N-terminal extracellular domain). In terms of tissue distribution, produced by the hypothalamus and placenta.

Its subcellular location is the secreted. Functionally, hormone regulating the release of corticotropin from pituitary gland. Induces NLRP6 in intestinal epithelial cells, hence may influence gut microbiota profile. The protein is Corticoliberin (CRH) of Homo sapiens (Human).